Reading from the N-terminus, the 319-residue chain is ATP-dependent 6-phosphofructokinase (319 aa).

An ATP-binding site is contributed by Gly11. An ADP-binding site is contributed by 21–25; it reads RAVVR. ATP-binding positions include 72–73 and 102–105; these read RC and GDGS. Asp103 provides a ligand contact to Mg(2+). 125–127 contributes to the substrate binding site; it reads TID. The active-site Proton acceptor is Asp127. Residue Arg154 participates in ADP binding. Residues Arg162 and 169 to 171 contribute to the substrate site; that span reads MGR. Residues 185–187, Arg211, and 213–215 each bind ADP; these read GAE and KLH. Residues Glu222, Arg243, and 249 to 252 contribute to the substrate site; that span reads HLQR.

This sequence belongs to the phosphofructokinase type A (PFKA) family. ATP-dependent PFK group I subfamily. Prokaryotic clade 'B1' sub-subfamily. In terms of assembly, homotetramer. The cofactor is Mg(2+).

Its subcellular location is the cytoplasm. It carries out the reaction beta-D-fructose 6-phosphate + ATP = beta-D-fructose 1,6-bisphosphate + ADP + H(+). It participates in carbohydrate degradation; glycolysis; D-glyceraldehyde 3-phosphate and glycerone phosphate from D-glucose: step 3/4. With respect to regulation, allosterically activated by ADP and other diphosphonucleosides, and allosterically inhibited by phosphoenolpyruvate. In terms of biological role, catalyzes the phosphorylation of D-fructose 6-phosphate to fructose 1,6-bisphosphate by ATP, the first committing step of glycolysis. The sequence is that of ATP-dependent 6-phosphofructokinase from Clostridium novyi (strain NT).